Here is a 67-residue protein sequence, read N- to C-terminus: MASGTVKWFNSEKGFGFIAQDGGGPDVFAHYSNINAQGYRELQEGQAVTFDITQGQKGPQAENITPA.

The region spanning 4 to 64 is the CSD domain; it reads GTVKWFNSEK…GQKGPQAENI (61 aa).

Its subcellular location is the cytoplasm. The polypeptide is Cold shock protein ScoF (scoF) (Streptomyces coelicolor (strain ATCC BAA-471 / A3(2) / M145)).